The primary structure comprises 352 residues: N-acetyl-gamma-glutamyl-phosphate reductase (352 aa).

Cysteine 155 is an active-site residue.

This sequence belongs to the NAGSA dehydrogenase family. Type 1 subfamily.

The protein localises to the cytoplasm. It catalyses the reaction N-acetyl-L-glutamate 5-semialdehyde + phosphate + NADP(+) = N-acetyl-L-glutamyl 5-phosphate + NADPH + H(+). It functions in the pathway amino-acid biosynthesis; L-arginine biosynthesis; N(2)-acetyl-L-ornithine from L-glutamate: step 3/4. Catalyzes the NADPH-dependent reduction of N-acetyl-5-glutamyl phosphate to yield N-acetyl-L-glutamate 5-semialdehyde. This chain is N-acetyl-gamma-glutamyl-phosphate reductase, found in Synechococcus elongatus (strain ATCC 33912 / PCC 7942 / FACHB-805) (Anacystis nidulans R2).